Consider the following 1454-residue polypeptide: MGSLGGLALCLLRLLLLGLQRPPLPGAGAQSAAGGCSFDEHYSNCGYSVALGTNGFTWEQINTWEKPMLDPAVPTGSFMMVNSSGRASGQKAHLLLPTLKENDTHCIDFHYYFSSRDRSSPGALNVYVKVNGGPQGNPVWNVSGVVTEGWVKAELAISTFWPHFYQVIFESVSLKGHPGYIAVDEVRVLAHPCRKAPHFLRLQNVEVNVGQNATFQCIAGGKWSQHDKLWLQQWNGRDTALMVTRVVNHRRFSATVSVADTSQRSISKYRCVIRSDGGSGVSNYAELIVKEPPTPIAPPELLAVGATYLWIKPNANSIIGDGPIILKEVEYRTTTGTWAETHIVDSPNYKLWHLDPDVEYEIRVLLTRPGEGGTGPPGPPLTTRTKCADPVHGPQNVEIVDIRARQLTLQWEPFGYAVTRCHSYNLTVQYQYVFNQQQYEAEEVIQTSSHYTLRGLRPFMTIRLRLLLSNPEGRMESEELVVQTEEDVPGAVPLESIQGGPFEEKIYIQWKPPNETNGVITLYEINYKAVGSLDPSADLSSQRGKVFKLRNETHHLFVGLYPGTTYSFTIKASTAKGFGPPVTTRIATKISAPSMPEYDADTPLNETDTTITVMLKPAQSRGAPVSVYQLVVKEERLQKSRRAADIIECFSVPVSYRNASNLDSLHYFAAELKPSNLPVTQPFTVGDNKTYNGYWNPPLSPLKSYSIYFQALSKANGETKINCVRLATKGAPMGSAQVTPGTPLCLLTTASTQNSNTVEPEKQVDNTVKMAGVIAGLLMFIIILLGVMLTIKRRKLAKKQKETQSGAQREMGPVASTDKPTAKLGTNRNDEGFSSSSQDVNGFTDGSRGELSQPTLTIQTHPYRTCDPVEMSYPRDQFQPAIRVADLLQHITQMKRGQGYGFKEEYEALPEGQTASWDTAKEDENRNKNRYGNIISYDHSRVRLLVLDGDPHSDYINANYIDGYHRPRHYIATQGPMQETVKDFWRMIWQENSASIVMVTNLVEVGRVKCVRYWPDDTEVYGDIKVTLIETEPLAEYVIRTFTVQKKGYHEIRELRLFHFTSWPDHGVPCYATGLLGFVRQVKFLNPPEAGPIVVHCSAGAGRTGCFIAIDTMLDMAENEGVVDIFNCVRELRAQRVNLVQTEEQYVFVHDAILEACLCGNTAIPVCEFRSLYYNISRLDPQTNSSQIKDEFQTLNIVTPRVRPEDCSIGLLPRNHDKNRSMDVLPLDRCLPFLISVDGESSNYINAALMDSHKQPAAFVVTQHPLPNTVADFWRLVFDYNCSSVVMLNEMDTAQLCMQYWPEKTSGCYGPIQVEFVSADIDEDIIHRIFRICNMARPQDGYRIVQHLQYIGWPAYRDTPPSKRSLLKVVRRLEKWQEQYDGREGRTVVHCLNGGGRSGTFCAICSVCEMIQQQNIIDVFHIVKTLRNNKSNMVETLEQYKFVYEVALEYLSSF.

An N-terminal signal peptide occupies residues 1-29 (MGSLGGLALCLLRLLLLGLQRPPLPGAGA). Residues 30-770 (QSAAGGCSFD…EKQVDNTVKM (741 aa)) are Extracellular-facing. The MAM domain occupies 34–195 (GGCSFDEHYS…VRVLAHPCRK (162 aa)). N-linked (GlcNAc...) asparagine glycosylation is found at N82, N102, N141, and N212. Positions 197-288 (PHFLRLQNVE…SGVSNYAELI (92 aa)) constitute an Ig-like C2-type domain. Residues C217 and C271 are joined by a disulfide bond. 3 consecutive Fibronectin type-III domains span residues 295–388 (PIAP…TKCA), 393–487 (GPQN…TEED), and 488–594 (VPGA…SAPS). 6 N-linked (GlcNAc...) asparagine glycosylation sites follow: N425, N514, N551, N605, N658, and N688. Positions 670–767 (AELKPSNLPV…VEPEKQVDNT (98 aa)) constitute a Fibronectin type-III 4 domain. Residues 771-791 (AGVIAGLLMFIIILLGVMLTI) traverse the membrane as a helical segment. At 792–1454 (KRRKLAKKQK…EVALEYLSSF (663 aa)) the chain is on the cytoplasmic side. Residues 800–852 (QKETQSGAQREMGPVASTDKPTAKLGTNRNDEGFSSSSQDVNGFTDGSRGELS) form a disordered region. Residues 824 to 841 (LGTNRNDEGFSSSSQDVN) show a composition bias toward polar residues. Tyrosine-protein phosphatase domains lie at 902-1156 (FKEE…ILEA) and 1188-1450 (IKDE…ALEY). Substrate contacts are provided by residues D1065, 1097 to 1103 (CSAGAGR), and Q1141. C1097 (phosphocysteine intermediate) is an active-site residue. A Phosphoserine modification is found at S1221. C1391 acts as the Phosphocysteine intermediate in catalysis.

The protein belongs to the protein-tyrosine phosphatase family. Receptor class 2B subfamily. Expression is restricted to the CNS. Distributed throughout the brain and spinal cord.

Its subcellular location is the membrane. The catalysed reaction is O-phospho-L-tyrosyl-[protein] + H2O = L-tyrosyl-[protein] + phosphate. Its function is as follows. May be involved in both signal transduction and cellular adhesion in the CNS. May have specific signaling roles in the tyrosine phosphorylation/dephosphorylation pathway in the anterior compartment of the adult cerebellar cortex. The sequence is that of Receptor-type tyrosine-protein phosphatase T (Ptprt) from Mus musculus (Mouse).